A 334-amino-acid chain; its full sequence is Hydroxyproline O-arabinosyltransferase NOD3 (334 aa).

A helical; Signal-anchor membrane pass occupies residues 1-18 (LLMVLGFFFATYNLVSMI).

Belongs to the RDN family.

Its subcellular location is the golgi apparatus membrane. The catalysed reaction is trans-4-hydroxy-L-prolyl-[protein] + UDP-beta-L-arabinofuranose = O-(beta-L-arabinofuranosyl)-trans-4-hydroxy-L-prolyl-[protein] + UDP + H(+). In terms of biological role, probable glycosyltransferase involved in the O-arabinosylation of several proteins including extensins and small signaling peptides. Catalyzes the transfer of the initial L-arabinose to the hydroxyl group of Hyp residues. Probably involved in the arabinosylation of CLAVATA3/ESR-related (CLE) signaling peptides that move from root to shoot, to interact with receptor kinase signaling that regulates nodulation. Involved in long distance nodulation signaling events. Involved in the autoregulation of nodulation (AON), a long distance systemic signaling from root to shoot and back again, which allows legumes to limit the number of root nodules formed based on available nitrogen and previous rhizobial colonization. The protein is Hydroxyproline O-arabinosyltransferase NOD3 of Pisum sativum (Garden pea).